A 161-amino-acid polypeptide reads, in one-letter code: Phosphopantetheine adenylyltransferase (161 aa).

S11 lines the substrate pocket. ATP contacts are provided by residues 11–12 and H19; that span reads SF. Substrate is bound by residues K43, L75, and R89. Residues 90–92, E100, and 125–131 contribute to the ATP site; these read GLR and YSFISSS.

Belongs to the bacterial CoaD family. In terms of assembly, homohexamer. The cofactor is Mg(2+).

Its subcellular location is the cytoplasm. It catalyses the reaction (R)-4'-phosphopantetheine + ATP + H(+) = 3'-dephospho-CoA + diphosphate. It functions in the pathway cofactor biosynthesis; coenzyme A biosynthesis; CoA from (R)-pantothenate: step 4/5. In terms of biological role, reversibly transfers an adenylyl group from ATP to 4'-phosphopantetheine, yielding dephospho-CoA (dPCoA) and pyrophosphate. This Staphylococcus haemolyticus (strain JCSC1435) protein is Phosphopantetheine adenylyltransferase.